Consider the following 126-residue polypeptide: uncharacterized protein (126 aa).

This is an uncharacterized protein from Acanthamoeba polyphaga mimivirus (APMV).